The sequence spans 376 residues: Lipoyl synthase 1, mitochondrial (376 aa).

The [4Fe-4S] cluster site is built by cysteine 109, cysteine 114, cysteine 120, cysteine 140, cysteine 144, cysteine 147, and serine 356. The 221-residue stretch at 125-345 (ETGTATATIM…QTLGMEMGFR (221 aa)) folds into the Radical SAM core domain.

The protein belongs to the radical SAM superfamily. Lipoyl synthase family. [4Fe-4S] cluster serves as cofactor.

It is found in the mitochondrion. The catalysed reaction is [[Fe-S] cluster scaffold protein carrying a second [4Fe-4S](2+) cluster] + N(6)-octanoyl-L-lysyl-[protein] + 2 oxidized [2Fe-2S]-[ferredoxin] + 2 S-adenosyl-L-methionine + 4 H(+) = [[Fe-S] cluster scaffold protein] + N(6)-[(R)-dihydrolipoyl]-L-lysyl-[protein] + 4 Fe(3+) + 2 hydrogen sulfide + 2 5'-deoxyadenosine + 2 L-methionine + 2 reduced [2Fe-2S]-[ferredoxin]. The protein operates within protein modification; protein lipoylation via endogenous pathway; protein N(6)-(lipoyl)lysine from octanoyl-[acyl-carrier-protein]: step 2/2. Catalyzes the radical-mediated insertion of two sulfur atoms into the C-6 and C-8 positions of the octanoyl moiety bound to the lipoyl domains of lipoate-dependent enzymes, thereby converting the octanoylated domains into lipoylated derivatives. This chain is Lipoyl synthase 1, mitochondrial, found in Pisum sativum (Garden pea).